We begin with the raw amino-acid sequence, 255 residues long: Putative ankyrin repeat protein R880 (255 aa).

ANK repeat units lie at residues 79–109 (SGINNYLLTACKYGHCKLVKYFVECGADIHY), 110–139 (KTDYALQLACKYGYLEIVKYLVKKGANINT), 141–169 (DCYAVQLASREGHLKIVKYLVELGTNVRK), 171–199 (RDLAFRWSVENNHLSVTKYLVELGSDVRS), and 201–229 (KNYAIKKSCEYGYFEMTQYLMNQGANFRV).

In Acanthamoeba polyphaga (Amoeba), this protein is Putative ankyrin repeat protein R880.